We begin with the raw amino-acid sequence, 664 residues long: Acetylcholinesterase (664 aa).

The N-terminal stretch at 1–29 (MFVNQRTRRPYMSVFVLVLGAAVICPAYG) is a signal peptide. Cys-95 and Cys-122 are joined by a disulfide. N-linked (GlcNAc...) asparagine glycosylation is present at Asn-117. Ser-261 acts as the Acyl-ester intermediate in catalysis. Cysteines 315 and 330 form a disulfide. A glycan (N-linked (GlcNAc...) asparagine) is linked at Asn-316. Residues Glu-390 and His-504 each act as charge relay system in the active site. A disulfide bridge connects residues Cys-466 and Cys-588. Asn-517 carries N-linked (GlcNAc...) asparagine glycosylation. Asn-647 carries the GPI-anchor amidated asparagine lipid modification. Residues 648–664 (KTPPHPQVILETRAFMH) constitute a propeptide, removed in mature form.

It belongs to the type-B carboxylesterase/lipase family. In terms of assembly, homodimer; disulfide-linked.

It localises to the synapse. It is found in the cell membrane. It carries out the reaction acetylcholine + H2O = choline + acetate + H(+). Rapidly hydrolyzes choline released into the synapse. It can hydrolyze butyrylthiocholine. This Anopheles stephensi (Indo-Pakistan malaria mosquito) protein is Acetylcholinesterase.